We begin with the raw amino-acid sequence, 139 residues long: Mitochondrial intermembrane space import and assembly protein 40 (139 aa).

3 disulfides stabilise this stretch: Cys53–Cys55, Cys64–Cys97, and Cys74–Cys87. The 45-residue stretch at 61-105 folds into the CHCH domain; that stretch reads SGPCGEQFKSAFSCFHYSQEEIKGSDCLDQFRAMQECMQKYPDIY. 2 consecutive short sequence motifs (cx9C motif) follow at residues 64–74 and 87–97; these read CGEQFKSAFSC and CLDQFRAMQEC. Positions 102 to 139 are disordered; the sequence is PDIYPQEDDEDEAEKEKQNKEAEAFSTETSDTKEESSS. Over residues 115 to 124 the composition is skewed to basic and acidic residues; sequence EKEKQNKEAE.

As to quaternary structure, monomer. Can form homooligomers.

The protein localises to the mitochondrion intermembrane space. In terms of biological role, central component of a redox-sensitive mitochondrial intermembrane space import machinery which is required for the biogenesis of respiratory chain complexes. Functions as chaperone and catalyzes the formation of disulfide bonds in substrate proteins, such as COX17 or MICU1. Required for the import and folding of small cysteine-containing proteins (small Tim) in the mitochondrial intermembrane space (IMS). Precursor proteins to be imported into the IMS are translocated in their reduced form into the mitochondria. This Xenopus tropicalis (Western clawed frog) protein is Mitochondrial intermembrane space import and assembly protein 40 (chchd4).